The primary structure comprises 296 residues: Ribosomal RNA small subunit methyltransferase A (296 aa).

Residues Asn28, Leu30, Gly55, Glu77, Asp103, and Asn122 each coordinate S-adenosyl-L-methionine.

It belongs to the class I-like SAM-binding methyltransferase superfamily. rRNA adenine N(6)-methyltransferase family. RsmA subfamily.

The protein localises to the cytoplasm. The enzyme catalyses adenosine(1518)/adenosine(1519) in 16S rRNA + 4 S-adenosyl-L-methionine = N(6)-dimethyladenosine(1518)/N(6)-dimethyladenosine(1519) in 16S rRNA + 4 S-adenosyl-L-homocysteine + 4 H(+). Functionally, specifically dimethylates two adjacent adenosines (A1518 and A1519) in the loop of a conserved hairpin near the 3'-end of 16S rRNA in the 30S particle. May play a critical role in biogenesis of 30S subunits. This Sinorhizobium fredii (strain NBRC 101917 / NGR234) protein is Ribosomal RNA small subunit methyltransferase A.